The chain runs to 519 residues: Voltage-gated potassium channel regulatory subunit KCNG4 (519 aa).

The tract at residues 1–25 (MPMPSRDGGLHPRHHHYGSHSPWSQ) is disordered. Residues 1-218 (MPMPSRDGGL…EMVENPQSGL (218 aa)) lie on the Cytoplasmic side of the membrane. Residues 219-240 (PGKVFACLSILFVATTAVSLCV) form a helical membrane-spanning segment. The Extracellular portion of the chain corresponds to 241–261 (STMPDLRAEEDQGECSRKCYY). The helical transmembrane segment at 262-283 (IFIVETICVAWFSLEFCLRFVQ) threads the bilayer. Residues 284 to 294 (AQDKCQFFQGP) are Cytoplasmic-facing. Residues 295–314 (LNIIDILAISPYYVSLAVSE) traverse the membrane as a helical segment. The Extracellular portion of the chain corresponds to 315–328 (EPPEDGERPSGSSY). The chain crosses the membrane as a helical; Voltage-sensor span at residues 329-353 (LEKVGLVLRVLRALRILYVMRLARH). Residues 354–368 (SLGLQTLGLTVRRCT) lie on the Cytoplasmic side of the membrane. A helical transmembrane segment spans residues 369 to 390 (REFGLLLLFLAVAITLFSPLVY). The Extracellular portion of the chain corresponds to 391–405 (VAEKESGRVLEFTSI). An intramembrane region (helical) is located at residues 406–417 (PASYWWAIISMT). The short motif at 418–423 (TVGYGD) is the Selectivity filter element. An intramembrane segment occupies 418 to 425 (TVGYGDMV). Over 426–432 (PRSVPGQ) the chain is Extracellular. The helical transmembrane segment at 433–461 (MVALSSILSGILIMAFPATSIFHTFSHSY) threads the bilayer. Topologically, residues 462-519 (LELKKEQEQLQARLRHLQNTGPASECELLDPHVASEHELMNDVNDLILEGPALPIMHM) are cytoplasmic.

This sequence belongs to the potassium channel family. G (TC 1.A.1.2) subfamily. Kv6.4/KCNG4 sub-subfamily. As to quaternary structure, heterotetramer with KCNB1. Does not form homomultimer. In terms of tissue distribution, highly expressed in brain, and at lower levels in liver, small intestine and colon.

The protein resides in the cell membrane. Functionally, regulatory subunit of the voltage-gated potassium (Kv) channel which, when coassembled with KCNB1, modulates the kinetics parameters of the heterotetrameric channel namely the time course of activation, deactivation and inactivation and on the voltage-dependence of activation. Potassium channel subunit that does not form functional channels by itself. Reduces the deactivation rate. Modulates the threshold for activation by shifting by approximately 20 mV in hyperpolarizing direction. Markedly changes the inactivation by shifting the voltage dependence of inactivation by approximately 40 mV in hyperpolarizing direction. Acceleratee activation and enhances the time course of activation. This chain is Voltage-gated potassium channel regulatory subunit KCNG4, found in Homo sapiens (Human).